A 464-amino-acid polypeptide reads, in one-letter code: MSNLFQREDDIVALATPLLSSALCVIRSSGISSIEKFSKMFSDPKRLLEASGHTIHYGYLIDKEICEKLDEVVVCIYRAPKSFTGQNSIEVMAHGSPIGIKRIIGCFLKVGFRMAEPGEFTLRAFLAGKLDLTKAEAVNELISAKTNKTHSLAVNKLSGSLFAKIDLIKKDILNFLSALSVHLDYETSEYEVAIPFEIISKSRDELKRLVDSYNTARKLDYGIALVLAGSVNVGKSSLFNLLLKEDRAIVSSYAGTTRDYIQASFEFDGILFNVFDTAGLRETTDFVEQLGIVKSNSLIKEASLVLYVIDLSARLTNDDLKFIDSYKGHSKVIFVLNKMDLEPNRQTVEFFNSGNINSSNLVKISTKTLFGIDSLYDKIRSLTCFDYIDIDAYDVIVSSSRQAELLKKAYTLIIELLNKIEKDISYDMLAFDVYEVLNFLGEITGEVTSEDVLNNMFKNFCLGK.

(6S)-5-formyl-5,6,7,8-tetrahydrofolate-binding residues include Arg-27, Glu-90, and Lys-129. The TrmE-type G domain occupies 222–384; that stretch reads GIALVLAGSV…LYDKIRSLTC (163 aa). Residues 232-237, 251-257, and 276-279 each bind GTP; these read NVGKSS, SSYAGTT, and DTAG. Ser-236 and Thr-257 together coordinate Mg(2+). Lys-464 is a binding site for (6S)-5-formyl-5,6,7,8-tetrahydrofolate.

Belongs to the TRAFAC class TrmE-Era-EngA-EngB-Septin-like GTPase superfamily. TrmE GTPase family. In terms of assembly, homodimer. Heterotetramer of two MnmE and two MnmG subunits. Requires K(+) as cofactor.

Its subcellular location is the cytoplasm. Exhibits a very high intrinsic GTPase hydrolysis rate. Involved in the addition of a carboxymethylaminomethyl (cmnm) group at the wobble position (U34) of certain tRNAs, forming tRNA-cmnm(5)s(2)U34. The protein is tRNA modification GTPase MnmE of Borrelia turicatae (strain 91E135).